Consider the following 199-residue polypeptide: Pectinesterase inhibitor 4 (199 aa).

Positions 1 to 25 (MLRFVVLSLTLMVFINSSNFPKTAA) are cleaved as a signal peptide. N-linked (GlcNAc...) asparagine glycans are attached at residues asparagine 16, asparagine 33, asparagine 43, and asparagine 83. Residues cysteine 42 and cysteine 51 are joined by a disulfide bond. A disulfide bridge connects residues cysteine 109 and cysteine 158.

It belongs to the PMEI family. In terms of assembly, binds reversibly to PME3 to inhibit its activity; the stability of the PME3-PMEI4 complex and the inhibition of the pectin methylesterase (PME) activity is pH-dependent, based on protonation status of amino-acids at the complex interface. In terms of tissue distribution, expressed in outer cell layer of roots, particularly in the root-hair zone. Expressed in roots and siliques.

It localises to the secreted. The protein resides in the extracellular space. It is found in the apoplast. Pectin methylesterase (PME) inhibitor that can target the root-expressed PME17 and PME3 in a pH-dependent manner, mainly in slightly acidic conditions (pH 6.3 and 5.0) but not at pH 7.5; this processus relies on changes in the protonation of amino acids involved in intermolecular and intramolecular interactions. Regulate de-methylesterification of pectins in roots and affects root growth. This Arabidopsis thaliana (Mouse-ear cress) protein is Pectinesterase inhibitor 4.